The primary structure comprises 250 residues: Testis-expressed protein 101 (250 aa).

The first 25 residues, 1-25 (MGACRIQYILLVFLLIASHWTLVQN), serve as a signal peptide directing secretion. 4 N-linked (GlcNAc...) asparagine glycosylation sites follow: N45, N110, N134, and N160. In terms of domain architecture, UPAR/Ly6 spans 141–215 (CPTCLALEPC…VKETCSYQSF (75 aa)). G224 is lipidated: GPI-anchor amidated glycine. Positions 225–250 (ASWMPTSLWVLELLLPALSLPLIYFP) are cleaved as a propeptide — removed in mature form.

In terms of assembly, interacts with VAMP3. Interacts with LY6K. Interacts with DPEP3; co-localized on the cell surface of spermatocytes, spermatids, and testicular spermatozoa, co-localized only in cytoplasmic droplets of caput and corpus epididymal sperm. Interacts with ADAM5. Post-translationally, N-glycosylated; by high mannose and/or biantennary complex and/or certain types of hybrid oligosaccharides; possesses different oligosaccharides chains according to its subcellular localization in the testis. In terms of processing, sheds from membrane raft by ACE and released from the cell surface of epididymal sperm while it passes through the caput epididymis leading to disappearance of TEX101 on spermatozoa; is essential to produce fertile spermatozoa. As to expression, detected in testis.

Its subcellular location is the cell membrane. It is found in the membrane raft. The protein resides in the cytoplasmic vesicle. The protein localises to the secretory vesicle. It localises to the acrosome. Its subcellular location is the secreted. Its function is as follows. Plays a role in fertilization by controlling binding of sperm to zona pellucida and migration of spermatozoa into the oviduct. May play a role in signal transduction and promote protein tyrosine phosphorylation. The protein is Testis-expressed protein 101 of Rattus norvegicus (Rat).